The chain runs to 88 residues: UPF0367 protein syc2447_c (88 aa).

Belongs to the UPF0367 family.

The chain is UPF0367 protein syc2447_c from Synechococcus sp. (strain ATCC 27144 / PCC 6301 / SAUG 1402/1) (Anacystis nidulans).